Reading from the N-terminus, the 95-residue chain is Protein K6 (95 aa).

The first 24 residues, Met-1–Ser-24, serve as a signal peptide directing secretion.

The polypeptide is Protein K6 (K6) (Human herpesvirus 8 type P (isolate GK18) (HHV-8)).